The chain runs to 387 residues: 3-ketoacyl-CoA thiolase (387 aa).

Cysteine 91 acts as the Acyl-thioester intermediate in catalysis. Active-site proton acceptor residues include histidine 343 and cysteine 373.

The protein belongs to the thiolase-like superfamily. Thiolase family. As to quaternary structure, heterotetramer of two alpha chains (FadB) and two beta chains (FadA).

Its subcellular location is the cytoplasm. It catalyses the reaction an acyl-CoA + acetyl-CoA = a 3-oxoacyl-CoA + CoA. It participates in lipid metabolism; fatty acid beta-oxidation. Functionally, catalyzes the final step of fatty acid oxidation in which acetyl-CoA is released and the CoA ester of a fatty acid two carbons shorter is formed. The polypeptide is 3-ketoacyl-CoA thiolase (Enterobacter sp. (strain 638)).